Consider the following 264-residue polypeptide: Thymidylate synthase (264 aa).

DUMP is bound by residues Arg-21 and 126–127 (RR). Residue Cys-146 is the Nucleophile of the active site. DUMP is bound by residues 166–169 (RSAD), Asn-177, and 207–209 (HLY). Asp-169 is a binding site for (6R)-5,10-methylene-5,6,7,8-tetrahydrofolate. Position 263 (Ala-263) interacts with (6R)-5,10-methylene-5,6,7,8-tetrahydrofolate.

Belongs to the thymidylate synthase family. Bacterial-type ThyA subfamily. As to quaternary structure, homodimer.

The protein localises to the cytoplasm. The catalysed reaction is dUMP + (6R)-5,10-methylene-5,6,7,8-tetrahydrofolate = 7,8-dihydrofolate + dTMP. It participates in pyrimidine metabolism; dTTP biosynthesis. Catalyzes the reductive methylation of 2'-deoxyuridine-5'-monophosphate (dUMP) to 2'-deoxythymidine-5'-monophosphate (dTMP) while utilizing 5,10-methylenetetrahydrofolate (mTHF) as the methyl donor and reductant in the reaction, yielding dihydrofolate (DHF) as a by-product. This enzymatic reaction provides an intracellular de novo source of dTMP, an essential precursor for DNA biosynthesis. The chain is Thymidylate synthase from Bradyrhizobium sp. (strain BTAi1 / ATCC BAA-1182).